Here is a 368-residue protein sequence, read N- to C-terminus: E3 ubiquitin-protein ligase ATL31 (368 aa).

Residues 1–23 form the signal peptide; sequence MDPIKHISLPVLVLFLLLSVSAG. A helical transmembrane segment spans residues 46 to 66; it reads AVVVVVVIAALFFMGFFTVYI. The RING-type; atypical zinc finger occupies 124 to 166; the sequence is CAICLNEFEDDETLRLLPKCDHVFHPHCIGAWLQGHVTCPVCR. S247 is subject to Phosphoserine. A disordered region spans residues 342–368; it reads NKDGEGTSSVQHIGTVGSTSGSLRLPV. Over residues 347 to 368 the composition is skewed to polar residues; sequence GTSSVQHIGTVGSTSGSLRLPV.

The protein belongs to the RING-type zinc finger family. ATL subfamily.

It localises to the membrane. It catalyses the reaction S-ubiquitinyl-[E2 ubiquitin-conjugating enzyme]-L-cysteine + [acceptor protein]-L-lysine = [E2 ubiquitin-conjugating enzyme]-L-cysteine + N(6)-ubiquitinyl-[acceptor protein]-L-lysine.. It functions in the pathway protein modification; protein ubiquitination. Functionally, E3 ubiquitin-protein ligase that is required for the plant C/N response during seedling growth transition. May be involved in the early steps of the plant defense signaling pathway. The sequence is that of E3 ubiquitin-protein ligase ATL31 (ATL31) from Arabidopsis thaliana (Mouse-ear cress).